A 344-amino-acid polypeptide reads, in one-letter code: Ribosomal large subunit pseudouridine synthase D (344 aa).

Residues 1–29 (MMNRLINEQDGRNYSAKPDSSAAGSQENE) form a disordered region. The S4 RNA-binding domain occupies 43–116 (LRLDQALAQL…IPLKILFEDD (74 aa)). Asp164 is an active-site residue.

The protein belongs to the pseudouridine synthase RluA family.

It localises to the cytoplasm. It catalyses the reaction uridine(1911/1915/1917) in 23S rRNA = pseudouridine(1911/1915/1917) in 23S rRNA. Responsible for synthesis of pseudouridine from uracil at positions 1911, 1915 and 1917 in 23S ribosomal RNA. The sequence is that of Ribosomal large subunit pseudouridine synthase D (rluD) from Nitrosomonas europaea (strain ATCC 19718 / CIP 103999 / KCTC 2705 / NBRC 14298).